Reading from the N-terminus, the 345-residue chain is Nicotinate-nucleotide--dimethylbenzimidazole phosphoribosyltransferase (345 aa).

Catalysis depends on Glu312, which acts as the Proton acceptor.

The protein belongs to the CobT family.

It carries out the reaction 5,6-dimethylbenzimidazole + nicotinate beta-D-ribonucleotide = alpha-ribazole 5'-phosphate + nicotinate + H(+). The protein operates within nucleoside biosynthesis; alpha-ribazole biosynthesis; alpha-ribazole from 5,6-dimethylbenzimidazole: step 1/2. Its function is as follows. Catalyzes the synthesis of alpha-ribazole-5'-phosphate from nicotinate mononucleotide (NAMN) and 5,6-dimethylbenzimidazole (DMB). The protein is Nicotinate-nucleotide--dimethylbenzimidazole phosphoribosyltransferase of Phocaeicola vulgatus (strain ATCC 8482 / DSM 1447 / JCM 5826 / CCUG 4940 / NBRC 14291 / NCTC 11154) (Bacteroides vulgatus).